Reading from the N-terminus, the 1372-residue chain is Capping protein, Arp2/3 and myosin-I linker protein 3 (1372 aa).

The segment at 126–151 (RGNADTPEGPRDTSPNSETSTSTTHS) is disordered. Residues 138 to 151 (TSPNSETSTSTTHS) show a composition bias toward low complexity. LRR repeat units follow at residues 244–264 (SLEE…QKLA), 274–295 (VLHA…SLSQ), 303–323 (GLTK…QALG), 335–357 (SLRY…NALY), 365–385 (ALVH…LGAL), 392–413 (HLTY…EAPP), 424–444 (TLSH…RALL), 455–475 (DLHL…ALQE), 482–501 (CVGS…LTLV), and 509–530 (SLKH…EEIL). 3 disordered regions span residues 865 to 900 (TLSD…ELGT), 970 to 1003 (KLRH…RQEN), and 1024 to 1372 (ESSS…PGTD). Over residues 982–995 (PRTTPPGPGRPSMP) the composition is skewed to pro residues. The necessary for localization at the cell membrane stretch occupies residues 1040-1073 (SEAPLPPLQKKRRRGLFHFRRPRSFKGDRGPGSP). Positions 1048 to 1063 (QKKRRRGLFHFRRPRS) are enriched in basic residues. Positions 1079–1098 (LPPPPPPPPTQESPPSPDPP) are enriched in pro residues. The span at 1099 to 1109 (SLGNNSSPCWS) shows a compositional bias: low complexity. Basic and acidic residues-rich tracts occupy residues 1163–1177 (ERAK…REGP) and 1219–1229 (RRAEATWHIAE). Residues 1233-1244 (PNHSCQSPSPAS) show a composition bias toward polar residues. A compositionally biased stretch (basic and acidic residues) spans 1348–1361 (QSCDKLEPDRRRPP).

Belongs to the CARMIL family. Widely expressed, with much higher levels in fetal tissues than in adult ones. Up-regulated in certain cancer tissues.

Its subcellular location is the cytoplasm. The protein localises to the cell membrane. This Homo sapiens (Human) protein is Capping protein, Arp2/3 and myosin-I linker protein 3.